We begin with the raw amino-acid sequence, 400 residues long: Centrosomal protein CEP57L1 (400 aa).

Serine 45 bears the Phosphoserine mark. Coiled-coil stretches lie at residues 47–111 (NNQA…KKDI) and 138–213 (NVER…QDRA). Disordered stretches follow at residues 222–261 (REPP…EPVS) and 314–400 (MESK…KWEQ). Over residues 244 to 258 (RTTSQARANPQSSGE) the composition is skewed to polar residues. Positions 261-345 (SICDSLSELL…EKIENSRINE (85 aa)) form a coiled coil. Composition is skewed to basic and acidic residues over residues 314-342 (MESK…ENSR) and 391-400 (LRRDDIKWEQ).

It belongs to the translokin family.

The protein resides in the cytoplasm. It localises to the cytoskeleton. The protein localises to the microtubule organizing center. Its subcellular location is the centrosome. In terms of biological role, centrosomal protein which may be required for microtubule attachment to centrosomes. The polypeptide is Centrosomal protein CEP57L1 (Cep57l1) (Mus musculus (Mouse)).